Consider the following 231-residue polypeptide: NADH-ubiquinone oxidoreductase chain 4 (231 aa).

Helical transmembrane passes span 1–21 (PIAG…YGII), 34–54 (MFLP…LTCL), 61–80 (SLIA…AIII), 85–107 (GLAG…FCLA), 128–148 (ILPM…AIPP), and 169–189 (TIIL…HMFL).

The protein belongs to the complex I subunit 4 family.

It localises to the mitochondrion membrane. It carries out the reaction a ubiquinone + NADH + 5 H(+)(in) = a ubiquinol + NAD(+) + 4 H(+)(out). Core subunit of the mitochondrial membrane respiratory chain NADH dehydrogenase (Complex I) that is believed to belong to the minimal assembly required for catalysis. Complex I functions in the transfer of electrons from NADH to the respiratory chain. The immediate electron acceptor for the enzyme is believed to be ubiquinone. This is NADH-ubiquinone oxidoreductase chain 4 (MT-ND4) from Gloydius blomhoffii (Mamushi).